Consider the following 490-residue polypeptide: Probable cytosol aminopeptidase (490 aa).

Lys-256 and Asp-261 together coordinate Mn(2+). Lys-268 is an active-site residue. The Mn(2+) site is built by Asp-280, Asp-340, and Glu-342. Residue Arg-344 is part of the active site.

Belongs to the peptidase M17 family. It depends on Mn(2+) as a cofactor.

The protein resides in the cytoplasm. It carries out the reaction Release of an N-terminal amino acid, Xaa-|-Yaa-, in which Xaa is preferably Leu, but may be other amino acids including Pro although not Arg or Lys, and Yaa may be Pro. Amino acid amides and methyl esters are also readily hydrolyzed, but rates on arylamides are exceedingly low.. The enzyme catalyses Release of an N-terminal amino acid, preferentially leucine, but not glutamic or aspartic acids.. In terms of biological role, presumably involved in the processing and regular turnover of intracellular proteins. Catalyzes the removal of unsubstituted N-terminal amino acids from various peptides. The protein is Probable cytosol aminopeptidase of Prochlorococcus marinus (strain MIT 9313).